Consider the following 1594-residue polypeptide: THO complex subunit 2 (1594 aa).

Residues 1–163 form an anchor domain; interaction with THOC5 and THOC7 region; the sequence is MAAAAVVVPA…KLFYKQQKFN (163 aa). The interval 164–534 is bow domain; interaction with THOC1 dock domain and THOC3; it reads LLREENEGYA…GQWKNETYNG (371 aa). The tract at residues 535 to 686 is MIF4G domain; interaction with THOC3 and DDX39B; sequence HPLLVKVKAQ…LILKEVVQKM (152 aa). Residues 687 to 1174 form a stern domain region; that stretch reads AGIEITEEMT…LAMGYSGQLK (488 aa). Residues 896–965 are a coiled coil; it reads HTSYEREVNK…LKLEKDNWLL (70 aa). Positions 923 to 928 match the Nuclear localization signal motif; it reads KKKKEK. The charged domain stretch occupies residues 1175-1594; that stretch reads SRKSHMIPEN…KHHKSSDKHR (420 aa). Basic and acidic residues-rich tracts occupy residues 1183-1192 and 1218-1234; these read ENEFHHKDPP and KSDE…RERS. A disordered region spans residues 1183 to 1594; it reads ENEFHHKDPP…KHHKSSDKHR (412 aa). Phosphoserine is present on serine 1222. The segment covering 1251–1264 has biased composition (low complexity); the sequence is GNSSNGNSGSNSNK. Composition is skewed to basic and acidic residues over residues 1265 to 1285, 1294 to 1343, and 1353 to 1383; these read AVKE…KEKT, ALGK…EKFK, and STQE…KGGE. At threonine 1385 the chain carries Phosphothreonine. Phosphoserine is present on residues serine 1390, serine 1393, serine 1417, serine 1450, serine 1486, and serine 1516. Positions 1416–1425 are enriched in polar residues; that stretch reads PSPSHSSTVK. Residues 1449-1504 are compositionally biased toward basic and acidic residues; the sequence is KSKEREMDKKDLDKSRERSREREKKDEKDRKERKRDHSNNDREVPPDITKRRKEEN. The stretch at 1464-1491 forms a coiled coil; sequence RERSREREKKDEKDRKERKRDHSNNDRE. The span at 1524 to 1583 shows a compositional bias: basic and acidic residues; it reads NEKDKEKNKSKSSGKEKSSSDSFKSEKMDKISSGGKKESRHDKEKIEKKEKRDSSGGKEE. Residues 1584-1594 are compositionally biased toward basic residues; it reads KKHHKSSDKHR.

This sequence belongs to the THOC2 family. As to quaternary structure, component of the THO subcomplex, which is composed of THOC1, THOC2, THOC3, THOC5, THOC6 and THOC7. The THO subcomplex interacts with DDX39B to form the THO-DDX39B complex which multimerizes into a 28-subunit tetrameric assembly. Component of the transcription/export (TREX) complex at least composed of ALYREF/THOC4, DDX39B, SARNP/CIP29, CHTOP and the THO subcomplex; in the complex interacts with THOC1, THOC3, THOC5, THOC7 and DDX39B. TREX seems to have a dynamic structure involving ATP-dependent remodeling. Interacts with POLDIP3. Interacts with ZC3H11A. Expressed in the hippocampus and the cortical neurons.

It is found in the nucleus. It localises to the nucleus speckle. The protein localises to the cytoplasm. Its function is as follows. Component of the THO subcomplex of the TREX complex which is thought to couple mRNA transcription, processing and nuclear export, and which specifically associates with spliced mRNA and not with unspliced pre-mRNA. Required for efficient export of polyadenylated RNA and spliced mRNA. The THOC1-THOC2-THOC3 core complex alone is sufficient to bind export factor NXF1-NXT1 and promote ATPase activity of DDX39B; in the complex THOC2 is the only component that directly interacts with DDX39B. TREX is recruited to spliced mRNAs by a transcription-independent mechanism, binds to mRNA upstream of the exon-junction complex (EJC) and is recruited in a splicing- and cap-dependent manner to a region near the 5' end of the mRNA where it functions in mRNA export to the cytoplasm via the TAP/NXF1 pathway. Required for NXF1 localization to the nuclear rim. THOC2 (and probably the THO complex) is involved in releasing mRNA from nuclear speckle domains. Plays a role for proper neuronal development. This Mus musculus (Mouse) protein is THO complex subunit 2 (Thoc2).